The sequence spans 429 residues: Transcription factor IIIA (429 aa).

The interval 1 to 45 (MGGEVLNNEGMPLAELKQETIPISRSESSESLNSLTSTRSSSSNR) is disordered. The segment covering 24–44 (SRSESSESLNSLTSTRSSSSN) has biased composition (low complexity). 9 consecutive C2H2-type zinc fingers follow at residues 49-74 (YFCDYDGCDKAFTRPSILTEHQLSVH), 80-102 (FQCDKCAKSFVKKSHLERHLYTH), 108-130 (FQCSYCGKGVTTRQQLKRHEVTH), 134-159 (FICPEEGCNLRFYKHPQLRAHILSVH), 163-186 (LTCPHCNKSFQRPYRLRNHISKHH), 194-219 (YQCTFAGCCKEFRIWSQLQSHIKNDH), 222-244 (LKCPICSKPCVGENGLQMHMIIH), 253-277 (WKCHICPDMSFSRKHDLLTHYGSIH), and 365-389 (YRCFYNNCSRTFKTKEKYEKHIDKH). The segment covering 406-416 (KTLVDQNHKEP) has biased composition (basic and acidic residues). Residues 406 to 429 (KTLVDQNHKEPFIIQKETQSAGDK) form a disordered region.

Its subcellular location is the nucleus. In terms of biological role, interacts with the internal control region (ICR) of approximately 50 bases within the 5S RNA genes, is required for correct transcription of these genes by RNA polymerase III. Also binds the transcribed 5S RNA's. This is Transcription factor IIIA (PZF1) from Saccharomyces cerevisiae (strain ATCC 204508 / S288c) (Baker's yeast).